Reading from the N-terminus, the 323-residue chain is Dehydrogenase/reductase SDR family member 7B (323 aa).

Topologically, residues 1-17 (MISPSFRKGMLKERVMD) are cytoplasmic. Residues 18–38 (LASQTTILPLLFGCLGIFSLF) traverse the membrane as a helical; Signal-anchor for type II membrane protein segment. The Lumenal portion of the chain corresponds to 39 to 323 (RLLQRIRSKA…ARKERKSKSS (285 aa)). NAD(+)-binding residues include Ser62 and Leu64. Ser192 contributes to the substrate binding site. The NAD(+) site is built by Tyr205, Lys209, and Thr240. Catalysis depends on Tyr205, which acts as the Proton acceptor.

Belongs to the short-chain dehydrogenases/reductases (SDR) family.

It is found in the endoplasmic reticulum membrane. Its function is as follows. Putative oxidoreductase. The sequence is that of Dehydrogenase/reductase SDR family member 7B from Mus musculus (Mouse).